We begin with the raw amino-acid sequence, 238 residues long: Ankyrin repeat domain-containing protein 49 (238 aa).

The tract at residues 38–57 is disordered; the sequence is TGTQSLWVGNSDEDEEQEEK. Ser-48 is subject to Phosphoserine. Over residues 48–57 the composition is skewed to acidic residues; that stretch reads SDEDEEQEEK. ANK repeat units lie at residues 72 to 105, 106 to 135, 139 to 168, and 172 to 205; these read DPSKLLLWAAEKNRLATVQRLLSEKAAEVNTRDE, DEYTPLHRAAYSGHIDVVRELVAKGADVHA, DGWTPLHSACKWNNTKVASFLLQHDADINA, and GLLTPLHLAAGNRDSRDTLELLLMNRYIKPELKN.

In terms of tissue distribution, expressed in spermatogonia, spermatocytes and round spermatids.

The protein resides in the nucleus. In terms of biological role, may have a role in spermatogenesis where it promotes autophagy in response to serum starvation, via the NF-kappaB pathway. The sequence is that of Ankyrin repeat domain-containing protein 49 (Ankrd49) from Mus musculus (Mouse).